The sequence spans 231 residues: 7-cyano-7-deazaguanine synthase (231 aa).

8–18 contacts ATP; sequence FSGGQDSTTCL. Residues Cys188, Cys197, Cys200, and Cys203 each coordinate Zn(2+).

The protein belongs to the QueC family. The cofactor is Zn(2+).

It carries out the reaction 7-carboxy-7-deazaguanine + NH4(+) + ATP = 7-cyano-7-deazaguanine + ADP + phosphate + H2O + H(+). Its pathway is purine metabolism; 7-cyano-7-deazaguanine biosynthesis. Its function is as follows. Catalyzes the ATP-dependent conversion of 7-carboxy-7-deazaguanine (CDG) to 7-cyano-7-deazaguanine (preQ(0)). In Escherichia coli O127:H6 (strain E2348/69 / EPEC), this protein is 7-cyano-7-deazaguanine synthase.